Here is a 113-residue protein sequence, read N- to C-terminus: Large ribosomal subunit protein bL19 (113 aa).

This sequence belongs to the bacterial ribosomal protein bL19 family.

In terms of biological role, this protein is located at the 30S-50S ribosomal subunit interface and may play a role in the structure and function of the aminoacyl-tRNA binding site. This is Large ribosomal subunit protein bL19 from Desulfitobacterium hafniense (strain DSM 10664 / DCB-2).